A 663-amino-acid polypeptide reads, in one-letter code: Probable potassium transport system protein Kup (663 aa).

Residues 1 to 23 (MSDNPSSRAGPEVVPTPPPSPAA) form a disordered region. Helical transmembrane passes span 81 to 101 (PANV…VVTF), 137 to 157 (LLII…VITP), 173 to 193 (PALE…LFFI), 201 to 221 (VGAV…ILGV), 224 to 244 (ILFD…AFFA), 248 to 268 (WHGF…EALY), 283 to 303 (WLLV…AILL), 315 to 335 (LLVP…AAIV), 373 to 393 (IYVP…VLGF), 399 to 419 (LAAA…LLFH), 433 to 453 (AWPL…ANIV), and 455 to 475 (VEEG…LLST).

It belongs to the HAK/KUP transporter (TC 2.A.72) family.

It is found in the cell inner membrane. The catalysed reaction is K(+)(in) + H(+)(in) = K(+)(out) + H(+)(out). In terms of biological role, transport of potassium into the cell. Likely operates as a K(+):H(+) symporter. In Anaeromyxobacter sp. (strain Fw109-5), this protein is Probable potassium transport system protein Kup.